The sequence spans 79 residues: Small ribosomal subunit protein bS16 (79 aa).

Belongs to the bacterial ribosomal protein bS16 family.

The chain is Small ribosomal subunit protein bS16 from Nitratidesulfovibrio vulgaris (strain DSM 19637 / Miyazaki F) (Desulfovibrio vulgaris).